The sequence spans 620 residues: Arginine--tRNA ligase (620 aa).

Residues Ala147–Gly157 carry the 'HIGH' region motif.

This sequence belongs to the class-I aminoacyl-tRNA synthetase family. As to quaternary structure, monomer.

Its subcellular location is the cytoplasm. The enzyme catalyses tRNA(Arg) + L-arginine + ATP = L-arginyl-tRNA(Arg) + AMP + diphosphate. This Bifidobacterium longum subsp. infantis (strain ATCC 15697 / DSM 20088 / JCM 1222 / NCTC 11817 / S12) protein is Arginine--tRNA ligase.